The following is a 508-amino-acid chain: Splicing regulatory glutamine/lysine-rich protein 1 (508 aa).

Positions 66 to 142 (RTVYVGNLNS…RPLKINHSNN (77 aa)) constitute an RRM domain. 2 positions are modified to phosphoserine: Ser171 and Ser184. The interval 173–508 (ISAAIEPESG…ENLSTKTEAV (336 aa)) is disordered. Residues 180–189 (ESGKSNERKG) show a composition bias toward basic and acidic residues. Basic residues predominate over residues 190-259 (GRSRSHTRSK…KSRSRSHSRD (70 aa)). The segment covering 260-355 (KRKDTREKIK…DRSKEIDEKR (96 aa)) has biased composition (basic and acidic residues). The residue at position 363 (Thr363) is a Phosphothreonine. Basic residues predominate over residues 372 to 388 (RRSRSSSRERRRRRSRS). Residues 419–488 (REKERDHISE…DAPRTEENKI (70 aa)) show a composition bias toward basic and acidic residues. A compositionally biased stretch (polar residues) spans 489–508 (QHNGNCQLNEENLSTKTEAV). Residue Lys504 forms a Glycyl lysine isopeptide (Lys-Gly) (interchain with G-Cter in SUMO2) linkage.

It belongs to the splicing factor SR family. In terms of assembly, homodimer. Binds SFRS1, SFRS2, SFRS3 and SFRS6. Interacts with the spliceosome. Interacts with SREK1IP1.

It localises to the nucleus. In terms of biological role, participates in the regulation of alternative splicing by modulating the activity of other splice facors. Inhibits the splicing activity of SFRS1, SFRS2 and SFRS6. Augments the splicing activity of SFRS3. This chain is Splicing regulatory glutamine/lysine-rich protein 1 (SREK1), found in Homo sapiens (Human).